A 385-amino-acid chain; its full sequence is 1-deoxy-D-xylulose 5-phosphate reductoisomerase (385 aa).

NADPH-binding residues include threonine 10, glycine 11, serine 12, isoleucine 13, glycine 36, asparagine 38, and asparagine 122. Residue lysine 123 participates in 1-deoxy-D-xylulose 5-phosphate binding. Glutamate 124 is a binding site for NADPH. Aspartate 148 contributes to the Mn(2+) binding site. 1-deoxy-D-xylulose 5-phosphate-binding residues include serine 149, glutamate 150, serine 174, and histidine 197. Glutamate 150 contacts Mn(2+). Glycine 203 provides a ligand contact to NADPH. 1-deoxy-D-xylulose 5-phosphate is bound by residues serine 210, asparagine 215, lysine 216, and glutamate 219. Position 219 (glutamate 219) interacts with Mn(2+).

The protein belongs to the DXR family. Mg(2+) is required as a cofactor. The cofactor is Mn(2+).

It catalyses the reaction 2-C-methyl-D-erythritol 4-phosphate + NADP(+) = 1-deoxy-D-xylulose 5-phosphate + NADPH + H(+). It functions in the pathway isoprenoid biosynthesis; isopentenyl diphosphate biosynthesis via DXP pathway; isopentenyl diphosphate from 1-deoxy-D-xylulose 5-phosphate: step 1/6. Its function is as follows. Catalyzes the NADPH-dependent rearrangement and reduction of 1-deoxy-D-xylulose-5-phosphate (DXP) to 2-C-methyl-D-erythritol 4-phosphate (MEP). This Citrifermentans bemidjiense (strain ATCC BAA-1014 / DSM 16622 / JCM 12645 / Bem) (Geobacter bemidjiensis) protein is 1-deoxy-D-xylulose 5-phosphate reductoisomerase.